The primary structure comprises 202 residues: Imidazoleglycerol-phosphate dehydratase (202 aa).

This sequence belongs to the imidazoleglycerol-phosphate dehydratase family.

The protein resides in the cytoplasm. The catalysed reaction is D-erythro-1-(imidazol-4-yl)glycerol 3-phosphate = 3-(imidazol-4-yl)-2-oxopropyl phosphate + H2O. The protein operates within amino-acid biosynthesis; L-histidine biosynthesis; L-histidine from 5-phospho-alpha-D-ribose 1-diphosphate: step 6/9. This chain is Imidazoleglycerol-phosphate dehydratase, found in Clavibacter michiganensis subsp. michiganensis (strain NCPPB 382).